The following is a 383-amino-acid chain: Putative glutamate--cysteine ligase 2-2 (383 aa).

The disordered stretch occupies residues Arg-35–Gly-56.

Belongs to the glutamate--cysteine ligase type 2 family. YbdK subfamily.

It carries out the reaction L-cysteine + L-glutamate + ATP = gamma-L-glutamyl-L-cysteine + ADP + phosphate + H(+). Functionally, ATP-dependent carboxylate-amine ligase which exhibits weak glutamate--cysteine ligase activity. The polypeptide is Putative glutamate--cysteine ligase 2-2 (Frankia alni (strain DSM 45986 / CECT 9034 / ACN14a)).